The chain runs to 405 residues: Probable tRNA sulfurtransferase (405 aa).

One can recognise a THUMP domain in the interval 60–165 (EPVNDRLKVV…QDGAYISNQL (106 aa)). ATP-binding positions include 183-184 (ML), 208-209 (HF), Arg-265, Gly-287, and Gln-296.

The protein belongs to the ThiI family.

Its subcellular location is the cytoplasm. It carries out the reaction [ThiI sulfur-carrier protein]-S-sulfanyl-L-cysteine + a uridine in tRNA + 2 reduced [2Fe-2S]-[ferredoxin] + ATP + H(+) = [ThiI sulfur-carrier protein]-L-cysteine + a 4-thiouridine in tRNA + 2 oxidized [2Fe-2S]-[ferredoxin] + AMP + diphosphate. The enzyme catalyses [ThiS sulfur-carrier protein]-C-terminal Gly-Gly-AMP + S-sulfanyl-L-cysteinyl-[cysteine desulfurase] + AH2 = [ThiS sulfur-carrier protein]-C-terminal-Gly-aminoethanethioate + L-cysteinyl-[cysteine desulfurase] + A + AMP + 2 H(+). It participates in cofactor biosynthesis; thiamine diphosphate biosynthesis. Its function is as follows. Catalyzes the ATP-dependent transfer of a sulfur to tRNA to produce 4-thiouridine in position 8 of tRNAs, which functions as a near-UV photosensor. Also catalyzes the transfer of sulfur to the sulfur carrier protein ThiS, forming ThiS-thiocarboxylate. This is a step in the synthesis of thiazole, in the thiamine biosynthesis pathway. The sulfur is donated as persulfide by IscS. In Lactobacillus delbrueckii subsp. bulgaricus (strain ATCC BAA-365 / Lb-18), this protein is Probable tRNA sulfurtransferase.